Consider the following 192-residue polypeptide: Peptidyl-tRNA hydrolase (192 aa).

Tyr14 contacts tRNA. His19 (proton acceptor) is an active-site residue. Residues Tyr66 and Asn68 each coordinate tRNA.

This sequence belongs to the PTH family. Monomer.

The protein localises to the cytoplasm. It carries out the reaction an N-acyl-L-alpha-aminoacyl-tRNA + H2O = an N-acyl-L-amino acid + a tRNA + H(+). Hydrolyzes ribosome-free peptidyl-tRNAs (with 1 or more amino acids incorporated), which drop off the ribosome during protein synthesis, or as a result of ribosome stalling. Functionally, catalyzes the release of premature peptidyl moieties from peptidyl-tRNA molecules trapped in stalled 50S ribosomal subunits, and thus maintains levels of free tRNAs and 50S ribosomes. In Coprothermobacter proteolyticus (strain ATCC 35245 / DSM 5265 / OCM 4 / BT), this protein is Peptidyl-tRNA hydrolase.